The sequence spans 240 residues: Putative exosome complex component RRP41 (240 aa).

It belongs to the RNase PH family. As to quaternary structure, component of the RNA exosome complex.

It is found in the cytoplasm. Its subcellular location is the nucleus. The protein localises to the nucleolus. It localises to the nucleoplasm. In terms of biological role, non-catalytic component of the RNA exosome complex which has 3'-&gt;5' exoribonuclease activity and participates in a multitude of cellular RNA processing and degradation events. The polypeptide is Putative exosome complex component RRP41 (exos-4.1) (Caenorhabditis briggsae).